The chain runs to 237 residues: Purine nucleoside phosphorylase DeoD-type (237 aa).

His-4 is a binding site for a purine D-ribonucleoside. Residues Gly-20, Arg-24, Arg-43, and 87-90 (RVGT) contribute to the phosphate site. A purine D-ribonucleoside-binding positions include 179–181 (EME) and 203–204 (SD). The Proton donor role is filled by Asp-204.

Belongs to the PNP/UDP phosphorylase family. As to quaternary structure, homohexamer; trimer of homodimers.

The catalysed reaction is a purine D-ribonucleoside + phosphate = a purine nucleobase + alpha-D-ribose 1-phosphate. The enzyme catalyses a purine 2'-deoxy-D-ribonucleoside + phosphate = a purine nucleobase + 2-deoxy-alpha-D-ribose 1-phosphate. Catalyzes the reversible phosphorolytic breakdown of the N-glycosidic bond in the beta-(deoxy)ribonucleoside molecules, with the formation of the corresponding free purine bases and pentose-1-phosphate. The sequence is that of Purine nucleoside phosphorylase DeoD-type from Streptococcus pyogenes serotype M4 (strain MGAS10750).